The sequence spans 120 residues: Large ribosomal subunit protein bL19 (120 aa).

It belongs to the bacterial ribosomal protein bL19 family.

In terms of biological role, this protein is located at the 30S-50S ribosomal subunit interface and may play a role in the structure and function of the aminoacyl-tRNA binding site. This chain is Large ribosomal subunit protein bL19, found in Rippkaea orientalis (strain PCC 8801 / RF-1) (Cyanothece sp. (strain PCC 8801)).